A 58-amino-acid polypeptide reads, in one-letter code: Apelin receptor early endogenous ligand (58 aa).

The first 22 residues, methionine 1–alanine 22, serve as a signal peptide directing secretion.

This sequence belongs to the Elabela/Toddler family. In terms of assembly, interacts with aplnra and aplnrb. Expressed ubiquitously during late blastula and gastrula stages and becomes restricted to the lateral mesoderm, endoderm, and anterior and posterior notochord after gastrulation.

It is found in the secreted. The protein resides in the extracellular space. Peptide hormone that functions as endogenous ligand for the G-protein-coupled apelin receptor (aplnra and/or aplnrb), that plays a role in the regulation of normal cardiovascular function and fluid homeostasis. Functions as a balanced agonist activating both G(i) protein pathway and beta-arrestin pathway of APLNR. Downstream G proteins activation, apelin can inhibit cAMP production and activate key intracellular effectors such as ERKs. On the other hand, APLNR activation induces beta-arrestin recruitment to the membrane leading to desensitization and internalization of the receptor. Required for mesendodermal differentiation, blood vessels formation and heart morphogenesis during early development and for adult cardiovascular homeostasis. Acts as a motogen by promoting mesendodermal cell migration during gastrulation by binding and activating the apelin receptor. Acts as an early embryonic regulator of cellular movement with a role in migration and development of cardiac progenitor cells. May act as a chemoattractant for the activation of angioblast migration toward the embryonic midline, i.e. the position of the future vessel formation, during vasculogenesis. Positively regulates sinus venosus (SV)-derived endothelial cells migration into the developing heart to promote coronary blood vessel sprouting. Involved in cardioprotective functions during heart failure. Mediates myocardial contractility in an ERK1/2-dependent manner. The polypeptide is Apelin receptor early endogenous ligand (Danio rerio (Zebrafish)).